Reading from the N-terminus, the 194-residue chain is ATP-dependent Clp protease proteolytic subunit (194 aa).

Catalysis depends on Ser98, which acts as the Nucleophile. The active site involves His123.

The protein belongs to the peptidase S14 family. As to quaternary structure, fourteen ClpP subunits assemble into 2 heptameric rings which stack back to back to give a disk-like structure with a central cavity, resembling the structure of eukaryotic proteasomes.

It localises to the cytoplasm. The enzyme catalyses Hydrolysis of proteins to small peptides in the presence of ATP and magnesium. alpha-casein is the usual test substrate. In the absence of ATP, only oligopeptides shorter than five residues are hydrolyzed (such as succinyl-Leu-Tyr-|-NHMec, and Leu-Tyr-Leu-|-Tyr-Trp, in which cleavage of the -Tyr-|-Leu- and -Tyr-|-Trp bonds also occurs).. Its function is as follows. Cleaves peptides in various proteins in a process that requires ATP hydrolysis. Has a chymotrypsin-like activity. Plays a major role in the degradation of misfolded proteins. The sequence is that of ATP-dependent Clp protease proteolytic subunit from Clostridium tetani (strain Massachusetts / E88).